The chain runs to 213 residues: NADH-quinone oxidoreductase subunit B (213 aa).

[4Fe-4S] cluster-binding residues include cysteine 38, cysteine 39, cysteine 104, and cysteine 133. The tract at residues 172-213 (IMPENTNRFPGQLEKPKTSTLTLEAPDADDAEEASTPEPVAA) is disordered. The span at 197–206 (PDADDAEEAS) shows a compositional bias: acidic residues.

This sequence belongs to the complex I 20 kDa subunit family. In terms of assembly, NDH-1 is composed of 14 different subunits. Subunits NuoB, C, D, E, F, and G constitute the peripheral sector of the complex. [4Fe-4S] cluster serves as cofactor.

It is found in the cell inner membrane. It catalyses the reaction a quinone + NADH + 5 H(+)(in) = a quinol + NAD(+) + 4 H(+)(out). Functionally, NDH-1 shuttles electrons from NADH, via FMN and iron-sulfur (Fe-S) centers, to quinones in the respiratory chain. The immediate electron acceptor for the enzyme in this species is believed to be a menaquinone. Couples the redox reaction to proton translocation (for every two electrons transferred, four hydrogen ions are translocated across the cytoplasmic membrane), and thus conserves the redox energy in a proton gradient. The polypeptide is NADH-quinone oxidoreductase subunit B (nuoB) (Salinibacter ruber (strain DSM 13855 / M31)).